Consider the following 352-residue polypeptide: N-acetyl-gamma-glutamyl-phosphate reductase (352 aa).

The protein belongs to the NAGSA dehydrogenase family. Type 1 subfamily.

It is found in the cytoplasm. It catalyses the reaction N-acetyl-L-glutamate 5-semialdehyde + phosphate + NADP(+) = N-acetyl-L-glutamyl 5-phosphate + NADPH + H(+). It functions in the pathway amino-acid biosynthesis; L-arginine biosynthesis; N(2)-acetyl-L-ornithine from L-glutamate: step 3/4. Catalyzes the NADPH-dependent reduction of N-acetyl-5-glutamyl phosphate to yield N-acetyl-L-glutamate 5-semialdehyde. The sequence is that of N-acetyl-gamma-glutamyl-phosphate reductase from Nostoc ellipsosporum.